We begin with the raw amino-acid sequence, 346 residues long: Protein RecA (346 aa).

68–75 (GPESSGKT) serves as a coordination point for ATP.

The protein belongs to the RecA family.

It is found in the cytoplasm. Functionally, can catalyze the hydrolysis of ATP in the presence of single-stranded DNA, the ATP-dependent uptake of single-stranded DNA by duplex DNA, and the ATP-dependent hybridization of homologous single-stranded DNAs. It interacts with LexA causing its activation and leading to its autocatalytic cleavage. This is Protein RecA from Heliobacterium modesticaldum (strain ATCC 51547 / Ice1).